A 179-amino-acid polypeptide reads, in one-letter code: ATP synthase subunit delta 1 (179 aa).

This sequence belongs to the ATPase delta chain family. In terms of assembly, F-type ATPases have 2 components, F(1) - the catalytic core - and F(0) - the membrane proton channel. F(1) has five subunits: alpha(3), beta(3), gamma(1), delta(1), epsilon(1). F(0) has three main subunits: a(1), b(2) and c(10-14). The alpha and beta chains form an alternating ring which encloses part of the gamma chain. F(1) is attached to F(0) by a central stalk formed by the gamma and epsilon chains, while a peripheral stalk is formed by the delta and b chains.

Its subcellular location is the cell inner membrane. Its function is as follows. F(1)F(0) ATP synthase produces ATP from ADP in the presence of a proton or sodium gradient. F-type ATPases consist of two structural domains, F(1) containing the extramembraneous catalytic core and F(0) containing the membrane proton channel, linked together by a central stalk and a peripheral stalk. During catalysis, ATP synthesis in the catalytic domain of F(1) is coupled via a rotary mechanism of the central stalk subunits to proton translocation. Functionally, this protein is part of the stalk that links CF(0) to CF(1). It either transmits conformational changes from CF(0) to CF(1) or is implicated in proton conduction. The protein is ATP synthase subunit delta 1 of Syntrophotalea carbinolica (strain DSM 2380 / NBRC 103641 / GraBd1) (Pelobacter carbinolicus).